Consider the following 168-residue polypeptide: Cyclic pyranopterin monophosphate synthase (168 aa).

Residues 81-83 (LCH) and 117-118 (ME) contribute to the substrate site. The active site involves aspartate 132.

It belongs to the MoaC family. As to quaternary structure, homohexamer; trimer of dimers.

It catalyses the reaction (8S)-3',8-cyclo-7,8-dihydroguanosine 5'-triphosphate = cyclic pyranopterin phosphate + diphosphate. It participates in cofactor biosynthesis; molybdopterin biosynthesis. Catalyzes the conversion of (8S)-3',8-cyclo-7,8-dihydroguanosine 5'-triphosphate to cyclic pyranopterin monophosphate (cPMP). This Deinococcus radiodurans (strain ATCC 13939 / DSM 20539 / JCM 16871 / CCUG 27074 / LMG 4051 / NBRC 15346 / NCIMB 9279 / VKM B-1422 / R1) protein is Cyclic pyranopterin monophosphate synthase.